Reading from the N-terminus, the 423-residue chain is 3-phosphoshikimate 1-carboxyvinyltransferase (423 aa).

Lys-20, Ser-21, and Arg-25 together coordinate 3-phosphoshikimate. Lys-20 serves as a coordination point for phosphoenolpyruvate. Phosphoenolpyruvate is bound by residues Gly-91 and Arg-119. The 3-phosphoshikimate site is built by Thr-163, Ser-164, Gln-165, Asp-305, Gln-328, and Lys-332. Gln-165 lines the phosphoenolpyruvate pocket. The active-site Proton acceptor is the Asp-305. Phosphoenolpyruvate-binding residues include Arg-336 and Arg-377.

The protein belongs to the EPSP synthase family. Monomer.

It localises to the cytoplasm. The enzyme catalyses 3-phosphoshikimate + phosphoenolpyruvate = 5-O-(1-carboxyvinyl)-3-phosphoshikimate + phosphate. The protein operates within metabolic intermediate biosynthesis; chorismate biosynthesis; chorismate from D-erythrose 4-phosphate and phosphoenolpyruvate: step 6/7. Functionally, catalyzes the transfer of the enolpyruvyl moiety of phosphoenolpyruvate (PEP) to the 5-hydroxyl of shikimate-3-phosphate (S3P) to produce enolpyruvyl shikimate-3-phosphate and inorganic phosphate. This Acetivibrio thermocellus (strain ATCC 27405 / DSM 1237 / JCM 9322 / NBRC 103400 / NCIMB 10682 / NRRL B-4536 / VPI 7372) (Clostridium thermocellum) protein is 3-phosphoshikimate 1-carboxyvinyltransferase.